Reading from the N-terminus, the 356-residue chain is 3-deoxy-alpha-D-manno-octulosonate 8-oxidase (356 aa).

It belongs to the iron-containing alcohol dehydrogenase family. A divalent metal cation serves as cofactor.

It catalyses the reaction 3-deoxy-alpha-D-manno-oct-2-ulosonate + O2 = 3,8-dideoxy-8-oxo-alpha-D-manno-octulosonate + H2O2. Its pathway is bacterial outer membrane biogenesis; lipopolysaccharide biosynthesis. Inhibited by EDTA. Functionally, catalyzes the first step of the biosynthesis of Kdo8N (8-amino-3,8-dideoxy-D-manno-octulosonate) from Kdo (3-deoxy-D-manno-octulosonate). This is 3-deoxy-alpha-D-manno-octulosonate 8-oxidase from Shewanella oneidensis (strain ATCC 700550 / JCM 31522 / CIP 106686 / LMG 19005 / NCIMB 14063 / MR-1).